A 304-amino-acid chain; its full sequence is Urease accessory protein UreD 2 (304 aa).

The protein belongs to the UreD family. UreD, UreF and UreG form a complex that acts as a GTP-hydrolysis-dependent molecular chaperone, activating the urease apoprotein by helping to assemble the nickel containing metallocenter of UreC. The UreE protein probably delivers the nickel.

Its subcellular location is the cytoplasm. In terms of biological role, required for maturation of urease via the functional incorporation of the urease nickel metallocenter. Functionally, disrupting the ure2 operon has no effect on urease activity or pathogen survival in BALB/c mice when administered orally. The protein is Urease accessory protein UreD 2 of Brucella abortus (strain 2308).